Reading from the N-terminus, the 797-residue chain is Protein tamozhennic (797 aa).

Residues 79–146 (QNAIVAFETI…AAEDTFVLEG (68 aa)) enclose the PUB domain. Disordered regions lie at residues 515–570 (AGGI…ISDL) and 638–697 (LSIT…SAGV). Over residues 662–679 (EKARTLDKKSGTGRREAK) the composition is skewed to basic and acidic residues. A RanBP2-type zinc finger spans residues 735-766 (IVTSPNEWSCSFCTFLNPDTKRICEMCCRSKD).

Homomultimer. Binds to dl and msl-1 via their nuclear localization signal (NLS). Also binds to Ran, Ran-like and mbo.

The protein resides in the cytoplasm. Its function is as follows. Has an essential role during oogenesis and embryogenesis, perhaps in modulating the levels of nuclear import of additional proteins. Modulates the nuclear import of dorsal (dl), Dif and male specific lethal 1 (msl-1). Negatively regulates nuclear import of dl and controls the accumulation of dl in the nucleus after immune challenge. The protein is Protein tamozhennic (tamo) of Drosophila melanogaster (Fruit fly).